The following is a 70-amino-acid chain: MNLIAAAIAIGLSALGAGIGNGLIVSRTVEGVARQPEARGQLMGIMFIGVGLVEALPIIGVVIAFMTFAG.

2 helical membrane passes run 4 to 24 and 45 to 65; these read IAAAIAIGLSALGAGIGNGLI and IMFIGVGLVEALPIIGVVIAF.

Belongs to the ATPase C chain family. F-type ATPases have 2 components, F(1) - the catalytic core - and F(0) - the membrane proton channel. F(1) has five subunits: alpha(3), beta(3), gamma(1), delta(1), epsilon(1). F(0) has three main subunits: a(1), b(2) and c(10-14). The alpha and beta chains form an alternating ring which encloses part of the gamma chain. F(1) is attached to F(0) by a central stalk formed by the gamma and epsilon chains, while a peripheral stalk is formed by the delta and b chains.

The protein localises to the cell membrane. Functionally, f(1)F(0) ATP synthase produces ATP from ADP in the presence of a proton or sodium gradient. F-type ATPases consist of two structural domains, F(1) containing the extramembraneous catalytic core and F(0) containing the membrane proton channel, linked together by a central stalk and a peripheral stalk. During catalysis, ATP synthesis in the catalytic domain of F(1) is coupled via a rotary mechanism of the central stalk subunits to proton translocation. Its function is as follows. Key component of the F(0) channel; it plays a direct role in translocation across the membrane. A homomeric c-ring of between 10-14 subunits forms the central stalk rotor element with the F(1) delta and epsilon subunits. In Staphylococcus aureus (strain Mu3 / ATCC 700698), this protein is ATP synthase subunit c.